A 400-amino-acid chain; its full sequence is Acetate kinase (400 aa).

Asn7 contacts Mg(2+). Lys14 lines the ATP pocket. Arg91 provides a ligand contact to substrate. Catalysis depends on Asp148, which acts as the Proton donor/acceptor. Residues 208–212 (HIGNG), 283–285 (DFR), and 332–336 (GIGEH) each bind ATP. Glu387 contacts Mg(2+).

It belongs to the acetokinase family. In terms of assembly, homodimer. The cofactor is Mg(2+). Mn(2+) is required as a cofactor.

It is found in the cytoplasm. The enzyme catalyses acetate + ATP = acetyl phosphate + ADP. It participates in metabolic intermediate biosynthesis; acetyl-CoA biosynthesis; acetyl-CoA from acetate: step 1/2. Functionally, catalyzes the formation of acetyl phosphate from acetate and ATP. Can also catalyze the reverse reaction. The sequence is that of Acetate kinase from Clostridium beijerinckii (strain ATCC 51743 / NCIMB 8052) (Clostridium acetobutylicum).